Reading from the N-terminus, the 146-residue chain is Large ribosomal subunit protein uL15 (146 aa).

The interval 1 to 46 (MAIELHDLKPAPGAHKAKTRVGRGEGSKGKTAGRGTKGTGARKNVP) is disordered. A compositionally biased stretch (low complexity) spans 29–43 (GKTAGRGTKGTGARK).

The protein belongs to the universal ribosomal protein uL15 family. Part of the 50S ribosomal subunit.

In terms of biological role, binds to the 23S rRNA. The protein is Large ribosomal subunit protein uL15 of Cutibacterium acnes (strain DSM 16379 / KPA171202) (Propionibacterium acnes).